Consider the following 286-residue polypeptide: Prohibitin-2, mitochondrial (286 aa).

Residues 1–13 (MSFNKVPNIPGAP) lie on the Mitochondrial matrix side of the membrane. The chain crosses the membrane as a helical; Signal-anchor for type II membrane protein span at residues 14-32 (ALSALLKVSVIGGLGVYAL). The Mitochondrial intermembrane portion of the chain corresponds to 33 to 286 (TNSLYNVDGG…LQEMNLEPKK (254 aa)). Residues 186–219 (KEFTAAIEAKQVAAQEAERAKFIVEKAEQDRRSA) are a coiled coil.

Belongs to the prohibitin family. In terms of assembly, component of a prohibitin multimeric complex in mitochondrial membranes. As to expression, mostly expressed in proliferative tissues, including vasculature, shoot and root apical tissues.

It localises to the mitochondrion inner membrane. Prohibitin probably acts as a holdase/unfoldase for the stabilization of newly synthesized mitochondrial proteins. The polypeptide is Prohibitin-2, mitochondrial (PHB2) (Arabidopsis thaliana (Mouse-ear cress)).